The following is a 240-amino-acid chain: MVVYRLIEDPIFPHPDEAEPDGLLAVGGDLSPERLLSAYASGIFPWYDERSPILWWSLDPRLILNFDKLHVSRRVKRKVRKREYTVTFDRAFESVIANCARKFRPGQAGTWILPEMIEAYVKLHKLGFVHSVEVWNREGNLAGGLYGVSLGKVFSGESMFFLEPDASKVGFSYLVQWLKNREFHFVDCQQPTDHLKSLGAEEVSRELFLDMLDEALEHPALRGTWEFMEGEYEMITEVLS.

It belongs to the L/F-transferase family.

Its subcellular location is the cytoplasm. The enzyme catalyses N-terminal L-lysyl-[protein] + L-leucyl-tRNA(Leu) = N-terminal L-leucyl-L-lysyl-[protein] + tRNA(Leu) + H(+). The catalysed reaction is N-terminal L-arginyl-[protein] + L-leucyl-tRNA(Leu) = N-terminal L-leucyl-L-arginyl-[protein] + tRNA(Leu) + H(+). It carries out the reaction L-phenylalanyl-tRNA(Phe) + an N-terminal L-alpha-aminoacyl-[protein] = an N-terminal L-phenylalanyl-L-alpha-aminoacyl-[protein] + tRNA(Phe). In terms of biological role, functions in the N-end rule pathway of protein degradation where it conjugates Leu, Phe and, less efficiently, Met from aminoacyl-tRNAs to the N-termini of proteins containing an N-terminal arginine or lysine. The chain is Leucyl/phenylalanyl-tRNA--protein transferase from Maridesulfovibrio salexigens (strain ATCC 14822 / DSM 2638 / NCIMB 8403 / VKM B-1763) (Desulfovibrio salexigens).